Here is a 209-residue protein sequence, read N- to C-terminus: uncharacterized protein (209 aa).

Basic and acidic residues predominate over residues methionine 1–lysine 11. The segment at methionine 1 to serine 20 is disordered.

This is an uncharacterized protein from Caenorhabditis elegans.